The sequence spans 233 residues: Large ribosomal subunit protein uL1 (233 aa).

The protein belongs to the universal ribosomal protein uL1 family. As to quaternary structure, part of the 50S ribosomal subunit.

Binds directly to 23S rRNA. Forms the L1 stalk. Unlike the case in the Thermus thermophilus 70S ribosome, this protein is not seen to block the exit path of the E site tRNA. It is clear that the protein in the structure is flexible however, so this is probably due to its position in these crystals. In terms of biological role, protein L1 is also a translational repressor protein, it controls the translation of the L11 operon by binding to its mRNA. The polypeptide is Large ribosomal subunit protein uL1 (rplA) (Deinococcus radiodurans (strain ATCC 13939 / DSM 20539 / JCM 16871 / CCUG 27074 / LMG 4051 / NBRC 15346 / NCIMB 9279 / VKM B-1422 / R1)).